Reading from the N-terminus, the 189-residue chain is Peptidyl-tRNA hydrolase (189 aa).

Tyr16 contacts tRNA. The Proton acceptor role is filled by His21. TRNA is bound by residues Phe67, Asn69, and Asn115.

Belongs to the PTH family. Monomer.

It is found in the cytoplasm. The catalysed reaction is an N-acyl-L-alpha-aminoacyl-tRNA + H2O = an N-acyl-L-amino acid + a tRNA + H(+). Functionally, hydrolyzes ribosome-free peptidyl-tRNAs (with 1 or more amino acids incorporated), which drop off the ribosome during protein synthesis, or as a result of ribosome stalling. In terms of biological role, catalyzes the release of premature peptidyl moieties from peptidyl-tRNA molecules trapped in stalled 50S ribosomal subunits, and thus maintains levels of free tRNAs and 50S ribosomes. This is Peptidyl-tRNA hydrolase from Legionella pneumophila subsp. pneumophila (strain Philadelphia 1 / ATCC 33152 / DSM 7513).